The following is an 83-amino-acid chain: Small ribosomal subunit protein uS17 (83 aa).

The protein belongs to the universal ribosomal protein uS17 family. Part of the 30S ribosomal subunit.

One of the primary rRNA binding proteins, it binds specifically to the 5'-end of 16S ribosomal RNA. In Campylobacter hominis (strain ATCC BAA-381 / DSM 21671 / CCUG 45161 / LMG 19568 / NCTC 13146 / CH001A), this protein is Small ribosomal subunit protein uS17.